Reading from the N-terminus, the 246-residue chain is Pyrroloquinoline-quinone synthase (246 aa).

Belongs to the PqqC family.

It catalyses the reaction 6-(2-amino-2-carboxyethyl)-7,8-dioxo-1,2,3,4,7,8-hexahydroquinoline-2,4-dicarboxylate + 3 O2 = pyrroloquinoline quinone + 2 H2O2 + 2 H2O + H(+). Its pathway is cofactor biosynthesis; pyrroloquinoline quinone biosynthesis. Functionally, ring cyclization and eight-electron oxidation of 3a-(2-amino-2-carboxyethyl)-4,5-dioxo-4,5,6,7,8,9-hexahydroquinoline-7,9-dicarboxylic-acid to PQQ. This Acidiphilium cryptum (strain JF-5) protein is Pyrroloquinoline-quinone synthase.